Here is a 259-residue protein sequence, read N- to C-terminus: Peroxisomal membrane protein 11B (259 aa).

Lysine 43 is modified (N6-acetyllysine). The tract at residues 157–176 (LKGSGGGVPGGSETGGLGGP) is disordered. Residues 159–176 (GSGGGVPGGSETGGLGGP) are compositionally biased toward gly residues. Residues 211 to 259 (VVRNACDLFIPLDKLGLWRCGPGIVGLCGLVSSILSILTLIYPWLRLKP) are interaction with PEX19, PEX11G and FIS1 and peroxisome targeting. Residues 233–255 (GIVGLCGLVSSILSILTLIYPWL) form a helical membrane-spanning segment.

This sequence belongs to the peroxin-11 family. As to quaternary structure, homodimer. Heterodimer with PEX11G. Interacts with PEX19. Interacts with FIS1.

It localises to the peroxisome membrane. In terms of biological role, involved in peroxisomal proliferation. May regulate peroxisome division by recruiting the dynamin-related GTPase DNM1L to the peroxisomal membrane. Promotes membrane protrusion and elongation on the peroxisomal surface. This Homo sapiens (Human) protein is Peroxisomal membrane protein 11B (PEX11B).